Reading from the N-terminus, the 341-residue chain is L-threonine 3-dehydrogenase (341 aa).

C38 contacts Zn(2+). Catalysis depends on charge relay system residues T40 and H43. Zn(2+) is bound by residues H63, E64, C93, C96, C99, and C107. Residues I175, D195, R200, 262–264 (LGI), and 286–287 (IY) contribute to the NAD(+) site.

This sequence belongs to the zinc-containing alcohol dehydrogenase family. As to quaternary structure, homotetramer. Zn(2+) serves as cofactor.

It is found in the cytoplasm. The enzyme catalyses L-threonine + NAD(+) = (2S)-2-amino-3-oxobutanoate + NADH + H(+). Its pathway is amino-acid degradation; L-threonine degradation via oxydo-reductase pathway; glycine from L-threonine: step 1/2. Catalyzes the NAD(+)-dependent oxidation of L-threonine to 2-amino-3-ketobutyrate. The polypeptide is L-threonine 3-dehydrogenase (Salmonella choleraesuis (strain SC-B67)).